Here is a 57-residue protein sequence, read N- to C-terminus: Large ribosomal subunit protein bL32c (57 aa).

It belongs to the bacterial ribosomal protein bL32 family.

It is found in the plastid. The protein resides in the chloroplast. This chain is Large ribosomal subunit protein bL32c, found in Liriodendron tulipifera (Tuliptree).